A 527-amino-acid polypeptide reads, in one-letter code: Peptide chain release factor 3 (527 aa).

The tr-type G domain maps to 9–277 (AKRRTFAIIS…AVVNWAPKPL (269 aa)). GTP-binding positions include 18–25 (SHPDAGKT), 86–90 (DTPGH), and 140–143 (NKLD).

Belongs to the TRAFAC class translation factor GTPase superfamily. Classic translation factor GTPase family. PrfC subfamily.

The protein resides in the cytoplasm. Its function is as follows. Increases the formation of ribosomal termination complexes and stimulates activities of RF-1 and RF-2. It binds guanine nucleotides and has strong preference for UGA stop codons. It may interact directly with the ribosome. The stimulation of RF-1 and RF-2 is significantly reduced by GTP and GDP, but not by GMP. The polypeptide is Peptide chain release factor 3 (Pseudomonas savastanoi pv. phaseolicola (strain 1448A / Race 6) (Pseudomonas syringae pv. phaseolicola (strain 1448A / Race 6))).